Here is a 316-residue protein sequence, read N- to C-terminus: Annexin D5 (316 aa).

An N-acetylalanine modification is found at alanine 2. Annexin repeat units follow at residues 11 to 82, 83 to 154, 166 to 238, and 242 to 313; these read PSPR…LWMP, EAVE…AYLN, ASVE…TILQ, and NSCF…SLLG. 4 residues coordinate Ca(2+): phenylalanine 24, glycine 26, glycine 28, and glutamate 68. Serine 95 bears the Phosphoserine mark. Threonine 112 bears the Phosphothreonine mark. Glycine 259 contacts Ca(2+). Phosphotyrosine is present on tyrosine 284. The Ca(2+) site is built by aspartate 299 and threonine 300.

The protein belongs to the annexin (TC 1.A.31.1) family. As to expression, expressed mainly in roots and flowers. Lower in stems and leaves.

This is Annexin D5 (ANN5) from Arabidopsis thaliana (Mouse-ear cress).